The following is a 293-amino-acid chain: uncharacterized protein (293 aa).

Residues T43 and Y105 each act as charge relay system in the active site. The Proton donor role is filled by Y131. Catalysis depends on K159, which acts as the Schiff-base intermediate with substrate.

Belongs to the DapA family. As to quaternary structure, homotetramer.

Its subcellular location is the cytoplasm. This is an uncharacterized protein from Thermococcus onnurineus (strain NA1).